A 365-amino-acid polypeptide reads, in one-letter code: DNA polymerase IV (365 aa).

The 182-residue stretch at 7–188 folds into the UmuC domain; sequence IIHIDMDAFY…LPVNKFFGVG (182 aa). Aspartate 11 and aspartate 106 together coordinate Mg(2+). Glutamate 107 is a catalytic residue.

It belongs to the DNA polymerase type-Y family. As to quaternary structure, monomer. The cofactor is Mg(2+).

It is found in the cytoplasm. The enzyme catalyses DNA(n) + a 2'-deoxyribonucleoside 5'-triphosphate = DNA(n+1) + diphosphate. Functionally, poorly processive, error-prone DNA polymerase involved in untargeted mutagenesis. Copies undamaged DNA at stalled replication forks, which arise in vivo from mismatched or misaligned primer ends. These misaligned primers can be extended by PolIV. Exhibits no 3'-5' exonuclease (proofreading) activity. May be involved in translesional synthesis, in conjunction with the beta clamp from PolIII. This is DNA polymerase IV from Clostridioides difficile (strain 630) (Peptoclostridium difficile).